Reading from the N-terminus, the 518-residue chain is Probable cytochrome P450 9h1 (518 aa).

Cysteine 462 is a binding site for heme.

Belongs to the cytochrome P450 family. Heme serves as cofactor.

Its subcellular location is the endoplasmic reticulum membrane. It is found in the microsome membrane. In terms of biological role, may be involved in the metabolism of insect hormones and in the breakdown of synthetic insecticides. This Drosophila melanogaster (Fruit fly) protein is Probable cytochrome P450 9h1 (Cyp9h1).